Here is a 561-residue protein sequence, read N- to C-terminus: Urocanate hydratase (561 aa).

NAD(+) contacts are provided by residues glycine 52–glycine 53, glutamine 130, glycine 176–glycine 178, glutamate 196, arginine 201, asparagine 242–alanine 243, glutamine 267–histidine 271, tyrosine 277–leucine 278, and tyrosine 326. Cysteine 414 is a catalytic residue. Glycine 496 lines the NAD(+) pocket.

It belongs to the urocanase family. NAD(+) is required as a cofactor.

Its subcellular location is the cytoplasm. It carries out the reaction 4-imidazolone-5-propanoate = trans-urocanate + H2O. The protein operates within amino-acid degradation; L-histidine degradation into L-glutamate; N-formimidoyl-L-glutamate from L-histidine: step 2/3. In terms of biological role, catalyzes the conversion of urocanate to 4-imidazolone-5-propionate. In Rhizobium rhizogenes (strain K84 / ATCC BAA-868) (Agrobacterium radiobacter), this protein is Urocanate hydratase.